Here is a 693-residue protein sequence, read N- to C-terminus: Elongation factor G (693 aa).

One can recognise a tr-type G domain in the interval 8 to 282 (EKFRNFGIMA…AVVDYLPSPI (275 aa)). GTP-binding positions include 17–24 (AHIDAGKT), 81–85 (DTPGH), and 135–138 (NKMD).

It belongs to the TRAFAC class translation factor GTPase superfamily. Classic translation factor GTPase family. EF-G/EF-2 subfamily.

The protein resides in the cytoplasm. Functionally, catalyzes the GTP-dependent ribosomal translocation step during translation elongation. During this step, the ribosome changes from the pre-translocational (PRE) to the post-translocational (POST) state as the newly formed A-site-bound peptidyl-tRNA and P-site-bound deacylated tRNA move to the P and E sites, respectively. Catalyzes the coordinated movement of the two tRNA molecules, the mRNA and conformational changes in the ribosome. This is Elongation factor G from Mycoplasmoides gallisepticum (strain R(low / passage 15 / clone 2)) (Mycoplasma gallisepticum).